The primary structure comprises 497 residues: Glutamyl-tRNA(Gln) amidotransferase subunit A (497 aa).

Catalysis depends on charge relay system residues Lys-91 and Ser-166. The tract at residues Ser-143 to Ser-171 is disordered. Residue Ser-190 is the Acyl-ester intermediate of the active site.

Belongs to the amidase family. GatA subfamily. In terms of assembly, heterotrimer of A, B and C subunits.

The enzyme catalyses L-glutamyl-tRNA(Gln) + L-glutamine + ATP + H2O = L-glutaminyl-tRNA(Gln) + L-glutamate + ADP + phosphate + H(+). In terms of biological role, allows the formation of correctly charged Gln-tRNA(Gln) through the transamidation of misacylated Glu-tRNA(Gln) in organisms which lack glutaminyl-tRNA synthetase. The reaction takes place in the presence of glutamine and ATP through an activated gamma-phospho-Glu-tRNA(Gln). The sequence is that of Glutamyl-tRNA(Gln) amidotransferase subunit A from Corynebacterium glutamicum (strain R).